A 2017-amino-acid polypeptide reads, in one-letter code: Protein cbp-1 (2017 aa).

Residues 1–13 are compositionally biased toward basic and acidic residues; it reads MDEPPSKKSRADS. Residues 1–182 are disordered; that stretch reads MDEPPSKKSR…PGMFQGDQQQ (182 aa). Low complexity-rich tracts occupy residues 21-30 and 78-90; these read ALSALESLEA and QPGQSQPQQPPQN. Residues 106–116 are compositionally biased toward polar residues; sequence NPSQTSNNSPR. Over residues 141 to 151 the composition is skewed to low complexity; that stretch reads MMSPPSMGRVP. Over residues 152–164 the composition is skewed to pro residues; it reads GPSPGGPQPPGPG. The span at 165–182 shows a compositional bias: low complexity; the sequence is QPQMRPGQPGMFQGDQQQ. R234 carries the symmetric dimethylarginine; by PRMT5; in vitro modification. The interval 307-398 is disordered; it reads SNGQPIRGPN…PGSSMLATHQ (92 aa). Positions 340–379 are enriched in low complexity; the sequence is QAAAAQHAAQQQAAAQAQAQAAAQQQQQQQREQEAAAAAQ. A TAZ-type 1 zinc finger spans residues 399–505; it reads DPEKRKLIQQ…REDCPVCKPL (107 aa). 2 disordered regions span residues 558-593 and 706-864; these read EGFNGNPFQNGPNRGGPRPPGGNGEIPNLPPPDMPD and GRSD…DTVF. The span at 559 to 573 shows a compositional bias: low complexity; the sequence is GFNGNPFQNGPNRGG. In terms of domain architecture, KIX spans 593-672; that stretch reads DCTKEWHHQV…KIYKIQKELQ (80 aa). Polar residues predominate over residues 721–773; sequence PSQQNQPWGGAPNSNMHQQIPPNGQVPQVNNSSTFPSSGNSTPNIGASSTVSA. Basic and acidic residues predominate over residues 834–854; it reads KDTKDGVAESKPKEQQAKREP. The region spanning 864 to 970 is the Bromo domain; sequence FSQEDLIKFL…EMFVSEMDPV (107 aa). Interaction with histone stretches follow at residues 902-948 and 1224-1226; these read DYHE…YNRK and YLD. Residues 1112–1492 enclose the CBP/p300-type HAT domain; the sequence is KYLASKLPHN…LAYSLHETDS (381 aa). Acetyl-CoA-binding positions include 1225-1227, 1237-1238, I1284, R1289, and W1293; these read LDS and RT. The segment covering 1349–1358 has biased composition (basic and acidic residues); the sequence is NEEAQRKVKE. The segment at 1349–1401 is disordered; that stretch reads NEEAQRKVKEDDDDGEDADGGLGGGDSGKKKSSKNKKNNLKKNAKMNKKKAGS. Basic residues predominate over residues 1378–1399; the sequence is KKSSKNKKNNLKKNAKMNKKKA. The segment at 1494-1540 adopts a ZZ-type zinc-finger fold; that stretch reads GMEYTCNKCSSPAVWHCQSCDDFDLCDGCKPTTQHPHEMEKIKSLIG. Residues C1499, C1502, C1510, C1513, C1519, C1522, H1528, and H1530 each contribute to the Zn(2+) site. The TAZ-type 2 zinc finger occupies 1550 to 1631; sequence GGTRYESIQR…ACTVPFCMNI (82 aa). Disordered regions lie at residues 1656–1828 and 1908–2017; these read GLQS…QPVR and SQMS…AGGQ. Positions 1667–1678 are enriched in polar residues; sequence TPSTVSNGTPSN. Over residues 1699–1708 the composition is skewed to low complexity; it reads QVQMQQHQGS. Residues 1748–1757 are compositionally biased toward polar residues; it reads PQMNANQSRY. Low complexity-rich tracts occupy residues 1793–1812 and 1908–1932; these read MNPQQQPQQQQGHPGLQNPG and SQMSMGSSNLQNLQQQQLQQQQAGA. Residues 1943-1962 show a composition bias toward polar residues; the sequence is QNNSQPRAPSGQFASMNPSM. Low complexity predominate over residues 1963–2017; sequence QQQYPQQQQGWPQQRQQNPGGMQQNANPYNQFQNRQNMMMMPQQQQPHPSNAGGQ.

In terms of assembly, interacts (via N-terminus domain and HAT domain) with prmt-5; the interaction results in methylation of cbp-1. Interacts (via HAT domain) with cep-1; cep-1 transcriptional activity may be inhibited by interaction with methylated cbp-1. Component of a complex that contains prmt-5 and cbp-1. Methylation by prmt-5 may repress the capacity of cbp-1 to enhance cep-1-dependent transcription of egl-1.

The protein resides in the nucleus. The enzyme catalyses L-lysyl-[protein] + acetyl-CoA = N(6)-acetyl-L-lysyl-[protein] + CoA + H(+). In terms of biological role, acetyltransferase enzyme. Acetylates histones, giving a specific tag for transcriptional activation. May prevent DNA damage-induced apoptosis by inhibiting cep-1-dependent transcription activation of the programmed cell death activator egl-1. In differentiated cells, negatively regulates localization of heterochromatin to the nuclear periphery. Plays a role in migration of gonadal distal tip cells, where it probably modulates expression of genes involved in integrin-mediated adhesion. This Caenorhabditis elegans protein is Protein cbp-1 (cbp-1).